The primary structure comprises 121 residues: Large ribosomal subunit protein bL20 (121 aa).

The protein belongs to the bacterial ribosomal protein bL20 family.

Binds directly to 23S ribosomal RNA and is necessary for the in vitro assembly process of the 50S ribosomal subunit. It is not involved in the protein synthesizing functions of that subunit. This chain is Large ribosomal subunit protein bL20, found in Francisella tularensis subsp. mediasiatica (strain FSC147).